Consider the following 172-residue polypeptide: Thioredoxin M5, chloroplastic (172 aa).

A chloroplast-targeting transit peptide spans 1 to 59; it reads MALETCFRAWATLHAPQPPSSGGSRDRLLLSGAGSSQSKPRLSVASPSPLRPASRFACQ. The segment at 17-47 is disordered; sequence QPPSSGGSRDRLLLSGAGSSQSKPRLSVASP. Residues 60–171 form the Thioredoxin domain; the sequence is CSNVVDEVVV…LATIIDKYVS (112 aa). Catalysis depends on nucleophile residues cysteine 95 and cysteine 98. Cysteines 95 and 98 form a disulfide.

The protein belongs to the thioredoxin family. Plant M-type subfamily. In terms of tissue distribution, expressed in leaves and at lower levels in flowers.

The protein localises to the plastid. The protein resides in the chloroplast. In terms of biological role, thiol-disulfide oxidoreductase probably involved in the redox regulation of chloroplastic enzymes. Required for chloroplast biogenesis and differentiation. Functions as an electron donor for plastidial 2-Cys peroxiredoxins and participates in hydrogen peroxide scavenging system in chloroplasts. Possesses reducing activity towards insulin disulfide bonds. The protein is Thioredoxin M5, chloroplastic (TRXM) of Oryza sativa subsp. japonica (Rice).